A 408-amino-acid polypeptide reads, in one-letter code: Protein BTN1 (408 aa).

The first 30 residues, 1-30, serve as a signal peptide directing secretion; the sequence is MSDKSHQIYCYFWLFGLINNVLYVVILSAA. The next 7 membrane-spanning stretches (helical) occupy residues 42–62, 80–100, 128–148, 150–170, 238–258, 323–343, and 369–389; these read LVLL…PFFI, LGMF…ISFA, SGTG…TSIF, VPVK…LFYF, TVYL…LFPI, WFYV…EGFL, and GAVS…GLGL.

It belongs to the battenin family.

The protein localises to the vacuole membrane. Functionally, plays a role in vacuolar arginine transport. Involved in pH homeostasis. May be involved in ion homeostasis together with IST2. Not necessary for mitochondrial function or ATP synthase degradation. This Saccharomyces cerevisiae (strain ATCC 204508 / S288c) (Baker's yeast) protein is Protein BTN1 (YHC3).